A 460-amino-acid chain; its full sequence is tRNA modification GTPase MnmE (460 aa).

Residues Arg29, Glu91, and Lys132 each coordinate (6S)-5-formyl-5,6,7,8-tetrahydrofolate. A TrmE-type G domain is found at 227–383; sequence GISIALIGKT…LIDTIIKKCG (157 aa). Asn237 is a K(+) binding site. GTP is bound by residues 237 to 242, 256 to 262, and 281 to 284; these read NVGKSS, TNIPGTT, and DTAG. Ser241 lines the Mg(2+) pocket. K(+) is bound by residues Thr256, Ile258, and Thr261. A Mg(2+)-binding site is contributed by Thr262. Lys460 serves as a coordination point for (6S)-5-formyl-5,6,7,8-tetrahydrofolate.

The protein belongs to the TRAFAC class TrmE-Era-EngA-EngB-Septin-like GTPase superfamily. TrmE GTPase family. As to quaternary structure, homodimer. Heterotetramer of two MnmE and two MnmG subunits. The cofactor is K(+).

It localises to the cytoplasm. Functionally, exhibits a very high intrinsic GTPase hydrolysis rate. Involved in the addition of a carboxymethylaminomethyl (cmnm) group at the wobble position (U34) of certain tRNAs, forming tRNA-cmnm(5)s(2)U34. In Prochlorococcus marinus (strain MIT 9312), this protein is tRNA modification GTPase MnmE.